The chain runs to 1116 residues: DNA polymerase III subunit alpha (1116 aa).

It belongs to the DNA polymerase type-C family. DnaE subfamily. In terms of assembly, DNA polymerase III contains a core (composed of alpha, epsilon and theta chains) that associates with a tau subunit. This core dimerizes to form the PolIII' complex. PolIII' associates with the gamma complex (composed of gamma, delta, delta', psi and chi chains) and with the beta chain to form the complete DNA polymerase III complex.

It localises to the cytoplasm. The enzyme catalyses DNA(n) + a 2'-deoxyribonucleoside 5'-triphosphate = DNA(n+1) + diphosphate. DNA polymerase III is a complex, multichain enzyme responsible for most of the replicative synthesis in bacteria. This DNA polymerase also exhibits 3' to 5' exonuclease activity. The alpha chain is the DNA polymerase. The sequence is that of DNA polymerase III subunit alpha (dnaE) from Halalkalibacterium halodurans (strain ATCC BAA-125 / DSM 18197 / FERM 7344 / JCM 9153 / C-125) (Bacillus halodurans).